A 423-amino-acid polypeptide reads, in one-letter code: Glucose-1-phosphate adenylyltransferase (423 aa).

Alpha-D-glucose 1-phosphate is bound by residues Tyr108, Gly173, 188 to 189, and Ser207; that span reads EK.

It belongs to the bacterial/plant glucose-1-phosphate adenylyltransferase family. As to quaternary structure, homotetramer.

It catalyses the reaction alpha-D-glucose 1-phosphate + ATP + H(+) = ADP-alpha-D-glucose + diphosphate. It functions in the pathway glycan biosynthesis; glycogen biosynthesis. Its function is as follows. Involved in the biosynthesis of ADP-glucose, a building block required for the elongation reactions to produce glycogen. Catalyzes the reaction between ATP and alpha-D-glucose 1-phosphate (G1P) to produce pyrophosphate and ADP-Glc. The polypeptide is Glucose-1-phosphate adenylyltransferase (Francisella tularensis subsp. tularensis (strain WY96-3418)).